Reading from the N-terminus, the 219-residue chain is Probable nicotinate-nucleotide adenylyltransferase (219 aa).

Belongs to the NadD family.

The enzyme catalyses nicotinate beta-D-ribonucleotide + ATP + H(+) = deamido-NAD(+) + diphosphate. It functions in the pathway cofactor biosynthesis; NAD(+) biosynthesis; deamido-NAD(+) from nicotinate D-ribonucleotide: step 1/1. Functionally, catalyzes the reversible adenylation of nicotinate mononucleotide (NaMN) to nicotinic acid adenine dinucleotide (NaAD). The sequence is that of Probable nicotinate-nucleotide adenylyltransferase from Erythrobacter litoralis (strain HTCC2594).